The chain runs to 961 residues: Valine--tRNA ligase (961 aa).

The 'HIGH' region signature appears at 48 to 58 (PNVTGSLHMGH). Positions 560–564 (KMSKS) match the 'KMSKS' region motif. Position 563 (lysine 563) interacts with ATP. Residues 892–961 (FINKDTELAR…QAQFKAIEAL (70 aa)) adopt a coiled-coil conformation.

Belongs to the class-I aminoacyl-tRNA synthetase family. ValS type 1 subfamily. In terms of assembly, monomer.

It is found in the cytoplasm. The enzyme catalyses tRNA(Val) + L-valine + ATP = L-valyl-tRNA(Val) + AMP + diphosphate. Its function is as follows. Catalyzes the attachment of valine to tRNA(Val). As ValRS can inadvertently accommodate and process structurally similar amino acids such as threonine, to avoid such errors, it has a 'posttransfer' editing activity that hydrolyzes mischarged Thr-tRNA(Val) in a tRNA-dependent manner. The polypeptide is Valine--tRNA ligase (Haemophilus ducreyi (strain 35000HP / ATCC 700724)).